Reading from the N-terminus, the 677-residue chain is Serine protease SPPA, chloroplastic (677 aa).

The N-terminal 68 residues, Met1–Ser68, are a transit peptide targeting the chloroplast. The disordered stretch occupies residues Asp63 to Gly94. Residues Glu70–Asp90 are compositionally biased toward basic and acidic residues. Ser460 (nucleophile) is an active-site residue.

The protein belongs to the peptidase S49 family.

The protein localises to the plastid. It is found in the chloroplast stroma. It localises to the chloroplast thylakoid membrane. Functionally, serine protease that may be involved in the light-dependent degradation of antenna and photosystem II in chloroplasts. May function during high light acclimation in plastids. The chain is Serine protease SPPA, chloroplastic (SPPA) from Arabidopsis thaliana (Mouse-ear cress).